The primary structure comprises 242 residues: Pyridoxine 5'-phosphate synthase (242 aa).

Residue N7 coordinates 3-amino-2-oxopropyl phosphate. 9-10 contacts 1-deoxy-D-xylulose 5-phosphate; sequence DH. R18 contributes to the 3-amino-2-oxopropyl phosphate binding site. The Proton acceptor role is filled by H43. 1-deoxy-D-xylulose 5-phosphate-binding residues include R45 and H50. Residue E70 is the Proton acceptor of the active site. T100 provides a ligand contact to 1-deoxy-D-xylulose 5-phosphate. H190 serves as the catalytic Proton donor. 3-amino-2-oxopropyl phosphate is bound by residues G191 and 212-213; that span reads GH.

It belongs to the PNP synthase family. In terms of assembly, homooctamer; tetramer of dimers.

It is found in the cytoplasm. It carries out the reaction 3-amino-2-oxopropyl phosphate + 1-deoxy-D-xylulose 5-phosphate = pyridoxine 5'-phosphate + phosphate + 2 H2O + H(+). It participates in cofactor biosynthesis; pyridoxine 5'-phosphate biosynthesis; pyridoxine 5'-phosphate from D-erythrose 4-phosphate: step 5/5. Its function is as follows. Catalyzes the complicated ring closure reaction between the two acyclic compounds 1-deoxy-D-xylulose-5-phosphate (DXP) and 3-amino-2-oxopropyl phosphate (1-amino-acetone-3-phosphate or AAP) to form pyridoxine 5'-phosphate (PNP) and inorganic phosphate. This is Pyridoxine 5'-phosphate synthase from Thermodesulfovibrio yellowstonii (strain ATCC 51303 / DSM 11347 / YP87).